The following is a 231-amino-acid chain: Cytidylate kinase 1 (231 aa).

7-15 provides a ligand contact to ATP; sequence GPSGAGKGT.

It belongs to the cytidylate kinase family. Type 1 subfamily.

It localises to the cytoplasm. It catalyses the reaction CMP + ATP = CDP + ADP. The catalysed reaction is dCMP + ATP = dCDP + ADP. The chain is Cytidylate kinase 1 from Haemophilus influenzae (strain ATCC 51907 / DSM 11121 / KW20 / Rd).